The sequence spans 323 residues: tRNA-modifying protein YgfZ (323 aa).

Folate contacts are provided by Trp-29 and Trp-182.

The protein belongs to the tRNA-modifying YgfZ family.

The protein resides in the cytoplasm. Functionally, folate-binding protein involved in regulating the level of ATP-DnaA and in the modification of some tRNAs. It is probably a key factor in regulatory networks that act via tRNA modification, such as initiation of chromosomal replication. The chain is tRNA-modifying protein YgfZ from Vibrio cholerae serotype O1 (strain ATCC 39541 / Classical Ogawa 395 / O395).